The primary structure comprises 190 residues: MLVMSITFSFVAVALLVYFYVKVRTSFSPDAYAKTMQQEVIKMIRDIRYEADIAVQMLEKKIGECNQVVRTIDRKLTLLNEEILKEHTARTLFRASGAGQETREEVCARPEHRSAPSRAGSSAAKPTPTKRGTIEVYNEKIIRDNGLRAESPLLKDAIIALSEKGLAPEFIAEKTGKPLGEVQLLINLSR.

The helical transmembrane segment at 1–21 (MLVMSITFSFVAVALLVYFYV) threads the bilayer. Residues 103–114 (REEVCARPEHRS) are compositionally biased toward basic and acidic residues. Positions 103–130 (REEVCARPEHRSAPSRAGSSAAKPTPTK) are disordered.

This sequence to B.burgdorferi BB0265.

It is found in the membrane. This is an uncharacterized protein from Treponema pallidum (strain Nichols).